Consider the following 361-residue polypeptide: Histidinol-phosphate aminotransferase (361 aa).

Lys221 is subject to N6-(pyridoxal phosphate)lysine.

This sequence belongs to the class-II pyridoxal-phosphate-dependent aminotransferase family. Histidinol-phosphate aminotransferase subfamily. It depends on pyridoxal 5'-phosphate as a cofactor.

The catalysed reaction is L-histidinol phosphate + 2-oxoglutarate = 3-(imidazol-4-yl)-2-oxopropyl phosphate + L-glutamate. Its pathway is amino-acid biosynthesis; L-histidine biosynthesis; L-histidine from 5-phospho-alpha-D-ribose 1-diphosphate: step 7/9. This Methanocella arvoryzae (strain DSM 22066 / NBRC 105507 / MRE50) protein is Histidinol-phosphate aminotransferase.